Here is a 74-residue protein sequence, read N- to C-terminus: uncharacterized protein (74 aa).

The interval 39–74 (SSPQAPGTLKPRALVRPSPGPVQENHLSEAQFPPKL) is disordered.

This is an uncharacterized protein from Homo sapiens (Human).